We begin with the raw amino-acid sequence, 38 residues long: Photosystem II reaction center protein X 2 (38 aa).

A helical membrane pass occupies residues 8 to 28 (FLWSLVYGAVVLGLLFGAIVF).

This sequence belongs to the PsbX family. Type 1 subfamily. In terms of assembly, PSII is composed of 1 copy each of membrane proteins PsbA, PsbB, PsbC, PsbD, PsbE, PsbF, PsbH, PsbI, PsbJ, PsbK, PsbL, PsbM, PsbT, PsbX, PsbY, PsbZ, Psb30/Ycf12, peripheral proteins PsbO, CyanoQ (PsbQ), PsbU, PsbV and a large number of cofactors. It forms dimeric complexes.

The protein resides in the cellular thylakoid membrane. Involved in the binding and/or turnover of quinones at the Q(B) site of photosystem II (PSII). PSII is a light-driven water plastoquinone oxidoreductase, using light energy to abstract electrons from H(2)O, generating a proton gradient subsequently used for ATP formation. In Synechococcus sp. (strain JA-3-3Ab) (Cyanobacteria bacterium Yellowstone A-Prime), this protein is Photosystem II reaction center protein X 2.